The chain runs to 182 residues: ATP synthase subunit b, chloroplastic (182 aa).

A helical transmembrane segment spans residues 33–55 (VLNIMLLLFGLIYVLKQFLGSLL).

Belongs to the ATPase B chain family. In terms of assembly, F-type ATPases have 2 components, F(1) - the catalytic core - and F(0) - the membrane proton channel. F(1) has five subunits: alpha(3), beta(3), gamma(1), delta(1), epsilon(1). F(0) has four main subunits: a(1), b(1), b'(1) and c(10-14). The alpha and beta chains form an alternating ring which encloses part of the gamma chain. F(1) is attached to F(0) by a central stalk formed by the gamma and epsilon chains, while a peripheral stalk is formed by the delta, b and b' chains.

The protein resides in the plastid. Its subcellular location is the chloroplast thylakoid membrane. Functionally, f(1)F(0) ATP synthase produces ATP from ADP in the presence of a proton or sodium gradient. F-type ATPases consist of two structural domains, F(1) containing the extramembraneous catalytic core and F(0) containing the membrane proton channel, linked together by a central stalk and a peripheral stalk. During catalysis, ATP synthesis in the catalytic domain of F(1) is coupled via a rotary mechanism of the central stalk subunits to proton translocation. Its function is as follows. Component of the F(0) channel, it forms part of the peripheral stalk, linking F(1) to F(0). This Antithamnion sp. (Red alga) protein is ATP synthase subunit b, chloroplastic.